We begin with the raw amino-acid sequence, 490 residues long: Cytochrome P450 2C14 (490 aa).

Position 435 (C435) interacts with heme.

It belongs to the cytochrome P450 family. It depends on heme as a cofactor.

The protein resides in the endoplasmic reticulum membrane. It is found in the microsome membrane. The catalysed reaction is an organic molecule + reduced [NADPH--hemoprotein reductase] + O2 = an alcohol + oxidized [NADPH--hemoprotein reductase] + H2O + H(+). Cytochromes P450 are a group of heme-thiolate monooxygenases. In liver microsomes, this enzyme is involved in an NADPH-dependent electron transport pathway. It oxidizes a variety of structurally unrelated compounds, including steroids, fatty acids, and xenobiotics. The protein is Cytochrome P450 2C14 (CYP2C14) of Oryctolagus cuniculus (Rabbit).